Here is a 189-residue protein sequence, read N- to C-terminus: UPF0251 protein MTH_1178 (189 aa).

Belongs to the UPF0251 family.

This chain is UPF0251 protein MTH_1178, found in Methanothermobacter thermautotrophicus (strain ATCC 29096 / DSM 1053 / JCM 10044 / NBRC 100330 / Delta H) (Methanobacterium thermoautotrophicum).